The primary structure comprises 545 residues: Chaperonin GroEL (545 aa).

ATP is bound by residues 29-32 (TMGP), K50, 86-90 (DGTTT), G414, 477-479 (DAA), and D493.

It belongs to the chaperonin (HSP60) family. Forms a cylinder of 14 subunits composed of two heptameric rings stacked back-to-back. Interacts with the co-chaperonin GroES.

The protein resides in the cytoplasm. The enzyme catalyses ATP + H2O + a folded polypeptide = ADP + phosphate + an unfolded polypeptide.. In terms of biological role, together with its co-chaperonin GroES, plays an essential role in assisting protein folding. The GroEL-GroES system forms a nano-cage that allows encapsulation of the non-native substrate proteins and provides a physical environment optimized to promote and accelerate protein folding. The polypeptide is Chaperonin GroEL (Campylobacter lari (strain RM2100 / D67 / ATCC BAA-1060)).